Reading from the N-terminus, the 136-residue chain is Small ribosomal subunit protein uS9 (136 aa).

The tract at residues 97–136 (SPDNRKPLKTEGHLSRDPRAKERRKYGLKKARKAPQFSKR) is disordered. Positions 98–116 (PDNRKPLKTEGHLSRDPRA) are enriched in basic and acidic residues. A compositionally biased stretch (basic residues) spans 117–136 (KERRKYGLKKARKAPQFSKR).

It belongs to the universal ribosomal protein uS9 family.

In Prochlorococcus marinus (strain MIT 9215), this protein is Small ribosomal subunit protein uS9.